Reading from the N-terminus, the 180-residue chain is F17 fimbrial protein (180 aa).

A signal peptide spans Met-1 to Ala-21. Residues Cys-37 and Cys-77 are joined by a disulfide bond.

This sequence belongs to the fimbrial protein family.

Its subcellular location is the fimbrium. Functionally, fimbriae (also called pili), polar filaments radiating from the surface of the bacterium to a length of 0.5-1.5 micrometers and numbering 100-300 per cell, enable bacteria to colonize the epithelium of specific host organs. The polypeptide is F17 fimbrial protein (F17a-A) (Escherichia coli).